The sequence spans 326 residues: Fructose-1,6-bisphosphatase class 1 (326 aa).

Mg(2+) is bound by residues Glu90, Asp111, Leu113, and Asp114. Residues 114–117, Tyr222, and Lys253 contribute to the substrate site; that span reads DGSS. Glu259 serves as a coordination point for Mg(2+).

The protein belongs to the FBPase class 1 family. As to quaternary structure, homotetramer. The cofactor is Mg(2+).

It localises to the cytoplasm. The enzyme catalyses beta-D-fructose 1,6-bisphosphate + H2O = beta-D-fructose 6-phosphate + phosphate. The protein operates within carbohydrate biosynthesis; gluconeogenesis. This chain is Fructose-1,6-bisphosphatase class 1, found in Citrifermentans bemidjiense (strain ATCC BAA-1014 / DSM 16622 / JCM 12645 / Bem) (Geobacter bemidjiensis).